The sequence spans 448 residues: MSRFHLPLAAAVVLVSCLWSANALVRPDGVGKLPALGWNSWNAFGCDIDDAKIMTAAKEIVNLGLKDLGYEYINIDDCWSVKSGRDKTTKRIVPDPAKFPDGIAGVADRIHDLGLKVGIYSSAGLTTCAGYPASLGYEEIDAQTFAEWGIDYLKYDNCGVPSNWTDAYTFCVPDPGSASTNGTCPDNENPAPQGYDWSTSLTAQRHQRMRDALLGVEHTIFYSLCEWGQADVSAWGNATGNSWRMSGDITPSWDRIAAIANENSFLLNHVDFWGHSDPDMLEVGNGDLTLAENRAHFALWAAMKSPLIIGTALDGIDPAHLEILLNKYLIAFHQDPVIGRPAYPYKWGYSPDWTFDPAHPAEYWSGPSSTLDGTLVLMLNSEGSRQTRTAVWKEIPELKDALGRKGRRQTGFRVTDVWTGKDLGCVRDHYTVTLESHDVAALLVGKGC.

Residues 1 to 23 (MSRFHLPLAAAVVLVSCLWSANA) form the signal peptide. Cystine bridges form between Cys46–Cys78 and Cys128–Cys158. Asp156 functions as the Nucleophile in the catalytic mechanism. Asn163 and Asn181 each carry an N-linked (GlcNAc...) asparagine glycan. Position 226–230 (226–230 (EWGQA)) interacts with substrate. A glycan (N-linked (GlcNAc...) asparagine) is linked at Asn237. Asp248 acts as the Proton donor in catalysis.

This sequence belongs to the glycosyl hydrolase 27 family.

The protein resides in the secreted. It catalyses the reaction Hydrolysis of terminal, non-reducing alpha-D-galactose residues in alpha-D-galactosides, including galactose oligosaccharides, galactomannans and galactolipids.. Hydrolyzes a variety of simple alpha-D-galactoside as well as more complex molecules such as oligosaccharides and polysaccharides. The sequence is that of Probable alpha-galactosidase B (aglB) from Aspergillus clavatus (strain ATCC 1007 / CBS 513.65 / DSM 816 / NCTC 3887 / NRRL 1 / QM 1276 / 107).